A 201-amino-acid chain; its full sequence is uncharacterized protein (201 aa).

4 helical membrane passes run 9 to 29 (YNVF…ILVA), 42 to 62 (FLFV…FFDV), 86 to 106 (SGVI…VVMV), and 126 to 146 (LPYL…SIGM). 2 stretches are compositionally biased toward basic and acidic residues: residues 165 to 174 (EPTDPNKTDN) and 182 to 191 (DENKKNEKEQ). The segment at 165–201 (EPTDPNKTDNRAVVINLDENKKNEKEQSPPSAEMTSL) is disordered. Residues 192–201 (SPPSAEMTSL) are compositionally biased toward polar residues.

Its subcellular location is the cell membrane. This is an uncharacterized protein from Mycoplasma genitalium (strain ATCC 33530 / DSM 19775 / NCTC 10195 / G37) (Mycoplasmoides genitalium).